Reading from the N-terminus, the 56-residue chain is Large ribosomal subunit protein bL33 (56 aa).

It belongs to the bacterial ribosomal protein bL33 family.

This is Large ribosomal subunit protein bL33 from Treponema denticola (strain ATCC 35405 / DSM 14222 / CIP 103919 / JCM 8153 / KCTC 15104).